Consider the following 100-residue polypeptide: Vesicle-associated membrane protein 3 (100 aa).

Ser-2 carries the post-translational modification N-acetylserine. Residues 2–77 (STGPTAATGS…KRKYWWKNCK (76 aa)) lie on the Cytoplasmic side of the membrane. In terms of domain architecture, v-SNARE coiled-coil homology spans 14–74 (RLQQTQNQVD…AKLKRKYWWK (61 aa)). Glycyl lysine isopeptide (Lys-Gly) (interchain with G-Cter in ubiquitin) cross-links involve residues Lys-66, Lys-68, and Lys-77. A helical; Anchor for type IV membrane protein membrane pass occupies residues 78 to 98 (MWAIGITVLVIFIIIIIVWVV). Residues 99–100 (SS) lie on the Vesicular side of the membrane.

Belongs to the synaptobrevin family. In terms of assembly, interacts with POPDC1 (via the C-terminus cytoplasmic tail). Interacts with BCAP31; involved in VAMP3 export from the endoplasmic reticulum. Interacts with BAIAP3; this interaction is increased in the presence of calcium. Interacts with PICALM. Post-translationally, ubiquitinated by RNF167 at Lys-66, Lys-68 and Lys-77, regulating the recycling endosome pathway. In terms of processing, (Microbial infection) Targeted and hydrolyzed by C.botulinum neurotoxin type B (BoNT/B, botB) which hydrolyzes the 59-Gln-|-Phe-60 bond and probably inhibits neurotransmitter release. (Microbial infection) Targeted and hydrolyzed by C.botulinum neurotoxin type D (BoNT/D, botD) which hydrolyzes the 42-Lys-|-Leu-43 bond and probably inhibits neurotransmitter release. Note that humans are not known to be infected by C.botulinum type D. Post-translationally, (Microbial infection) Targeted and hydrolyzed by C.botulinum neurotoxin type F (BoNT/F, botF) which hydrolyzes the 41-Gln-|-Lys-42 bond and probably inhibits neurotransmitter release.

The protein localises to the early endosome membrane. It localises to the recycling endosome membrane. The protein resides in the synapse. Its subcellular location is the synaptosome. Its function is as follows. SNARE involved in vesicular transport from the late endosomes to the trans-Golgi network. The protein is Vesicle-associated membrane protein 3 (VAMP3) of Homo sapiens (Human).